The primary structure comprises 124 residues: Large ribosomal subunit protein uL29 (124 aa).

Belongs to the universal ribosomal protein uL29 family.

In Triticum aestivum (Wheat), this protein is Large ribosomal subunit protein uL29 (RPL35).